The primary structure comprises 635 residues: UvrABC system protein C (635 aa).

The GIY-YIG domain maps to 20-97 (ERSGVYRMFD…IKKFQPKFNI (78 aa)). The region spanning 207–242 (KELQENLSKKMEELSEQMRFEEAAEIRDRIKALSYV) is the UVR domain.

Belongs to the UvrC family. As to quaternary structure, interacts with UvrB in an incision complex.

Its subcellular location is the cytoplasm. Functionally, the UvrABC repair system catalyzes the recognition and processing of DNA lesions. UvrC both incises the 5' and 3' sides of the lesion. The N-terminal half is responsible for the 3' incision and the C-terminal half is responsible for the 5' incision. The chain is UvrABC system protein C from Rickettsia bellii (strain RML369-C).